The primary structure comprises 171 residues: 3-hydroxydecanoyl-[acyl-carrier-protein] dehydratase (171 aa).

The active site involves His-70.

This sequence belongs to the thioester dehydratase family. FabA subfamily. As to quaternary structure, homodimer.

Its subcellular location is the cytoplasm. It carries out the reaction a (3R)-hydroxyacyl-[ACP] = a (2E)-enoyl-[ACP] + H2O. The catalysed reaction is (3R)-hydroxydecanoyl-[ACP] = (2E)-decenoyl-[ACP] + H2O. The enzyme catalyses (2E)-decenoyl-[ACP] = (3Z)-decenoyl-[ACP]. It functions in the pathway lipid metabolism; fatty acid biosynthesis. Functionally, necessary for the introduction of cis unsaturation into fatty acids. Catalyzes the dehydration of (3R)-3-hydroxydecanoyl-ACP to E-(2)-decenoyl-ACP and then its isomerization to Z-(3)-decenoyl-ACP. Can catalyze the dehydratase reaction for beta-hydroxyacyl-ACPs with saturated chain lengths up to 16:0, being most active on intermediate chain length. This chain is 3-hydroxydecanoyl-[acyl-carrier-protein] dehydratase, found in Shewanella pealeana (strain ATCC 700345 / ANG-SQ1).